We begin with the raw amino-acid sequence, 554 residues long: CTP synthase (554 aa).

Residues 1–265 (MTPLIFVTGG…DEIVVNQLKL (265 aa)) form an amidoligase domain region. CTP is bound at residue S13. Position 13 (S13) interacts with UTP. Residue 14 to 19 (SLGKGI) coordinates ATP. Mg(2+) contacts are provided by D71 and E139. CTP contacts are provided by residues 146–148 (DIE), 186–191 (KTKPTQ), and K222. UTP contacts are provided by residues 186 to 191 (KTKPTQ) and K222. The 254-residue stretch at 292 to 545 (TIAVVGKYVD…IRAARERKAG (254 aa)) folds into the Glutamine amidotransferase type-1 domain. G353 is a binding site for L-glutamine. C380 (nucleophile; for glutamine hydrolysis) is an active-site residue. Residues 381–384 (YGMQ), E404, and R471 contribute to the L-glutamine site. Active-site residues include H518 and E520.

It belongs to the CTP synthase family. Homotetramer.

It catalyses the reaction UTP + L-glutamine + ATP + H2O = CTP + L-glutamate + ADP + phosphate + 2 H(+). It carries out the reaction L-glutamine + H2O = L-glutamate + NH4(+). The enzyme catalyses UTP + NH4(+) + ATP = CTP + ADP + phosphate + 2 H(+). It participates in pyrimidine metabolism; CTP biosynthesis via de novo pathway; CTP from UDP: step 2/2. With respect to regulation, allosterically activated by GTP, when glutamine is the substrate; GTP has no effect on the reaction when ammonia is the substrate. The allosteric effector GTP functions by stabilizing the protein conformation that binds the tetrahedral intermediate(s) formed during glutamine hydrolysis. Inhibited by the product CTP, via allosteric rather than competitive inhibition. Functionally, catalyzes the ATP-dependent amination of UTP to CTP with either L-glutamine or ammonia as the source of nitrogen. Regulates intracellular CTP levels through interactions with the four ribonucleotide triphosphates. The protein is CTP synthase of Stenotrophomonas maltophilia (strain K279a).